Here is a 614-residue protein sequence, read N- to C-terminus: Asparagine synthetase [glutamine-hydrolyzing] 3 (614 aa).

The active-site For GATase activity is the Cys2. The Glutamine amidotransferase type-2 domain maps to 2–216 (CGITGWVDFK…PAHALTFSKD (215 aa)). L-glutamine is bound by residues 50–54 (RLAVV), 77–79 (NGE), and Asp102. 377-378 (SG) provides a ligand contact to ATP.

It belongs to the asparagine synthetase family.

The catalysed reaction is L-aspartate + L-glutamine + ATP + H2O = L-asparagine + L-glutamate + AMP + diphosphate + H(+). It functions in the pathway amino-acid biosynthesis; L-asparagine biosynthesis; L-asparagine from L-aspartate (L-Gln route): step 1/1. In terms of biological role, asparagine synthetase involved in sporulation. The protein is Asparagine synthetase [glutamine-hydrolyzing] 3 (asnO) of Bacillus subtilis (strain 168).